Reading from the N-terminus, the 136-residue chain is MQRVLLASKIHRATVTQADLHYVGSITIDAELMAAADIVEGEQVHVVDITSGARLVTYAITGTPGSGVIGINGAAAHLISPGNLVIIMSFVHLDEAERADHRANVVHVDADNHIVTIGSDPAQPVPGAADQLVGRV.

The Schiff-base intermediate with substrate; via pyruvic acid role is filled by S25. At S25 the chain carries Pyruvic acid (Ser). T57 contributes to the substrate binding site. Y58 functions as the Proton donor in the catalytic mechanism. 73 to 75 (GAA) lines the substrate pocket.

This sequence belongs to the PanD family. As to quaternary structure, heterooctamer of four alpha and four beta subunits. The cofactor is pyruvate. Is synthesized initially as an inactive proenzyme, which is activated by self-cleavage at a specific serine bond to produce a beta-subunit with a hydroxyl group at its C-terminus and an alpha-subunit with a pyruvoyl group at its N-terminus.

It localises to the cytoplasm. The catalysed reaction is L-aspartate + H(+) = beta-alanine + CO2. It participates in cofactor biosynthesis; (R)-pantothenate biosynthesis; beta-alanine from L-aspartate: step 1/1. Catalyzes the pyruvoyl-dependent decarboxylation of aspartate to produce beta-alanine. This Mycolicibacterium smegmatis (strain ATCC 700084 / mc(2)155) (Mycobacterium smegmatis) protein is Aspartate 1-decarboxylase.